The chain runs to 169 residues: uncharacterized protein (169 aa).

This is an uncharacterized protein from Escherichia coli (strain K12).